Here is a 421-residue protein sequence, read N- to C-terminus: Imidazolonepropionase (421 aa).

H81 and H83 together coordinate Fe(3+). Positions 81 and 83 each coordinate Zn(2+). Residues R90, Y153, and H186 each coordinate 4-imidazolone-5-propanoate. Y153 contributes to the N-formimidoyl-L-glutamate binding site. Position 251 (H251) interacts with Fe(3+). Residue H251 participates in Zn(2+) binding. E254 lines the 4-imidazolone-5-propanoate pocket. D326 is a Fe(3+) binding site. D326 provides a ligand contact to Zn(2+). Residues N328 and G330 each contribute to the N-formimidoyl-L-glutamate site. S331 is a 4-imidazolone-5-propanoate binding site.

Belongs to the metallo-dependent hydrolases superfamily. HutI family. Requires Zn(2+) as cofactor. Fe(3+) serves as cofactor.

It localises to the cytoplasm. It catalyses the reaction 4-imidazolone-5-propanoate + H2O = N-formimidoyl-L-glutamate. It participates in amino-acid degradation; L-histidine degradation into L-glutamate; N-formimidoyl-L-glutamate from L-histidine: step 3/3. In terms of biological role, catalyzes the hydrolytic cleavage of the carbon-nitrogen bond in imidazolone-5-propanoate to yield N-formimidoyl-L-glutamate. It is the third step in the universal histidine degradation pathway. The sequence is that of Imidazolonepropionase from Streptococcus pyogenes serotype M1.